The primary structure comprises 291 residues: Lactoylglutathione lyase (291 aa).

VOC domains lie at 24 to 149 (RLLH…LIQR) and 155 to 283 (PLCQ…LVDN). 3 residues coordinate substrate: Arg-31, Asn-82, and His-96. His-96 is a catalytic residue. Glu-145 functions as the Proton donor/acceptor in the catalytic mechanism. Glu-145 is a binding site for Ni(2+). Active-site residues include Gln-158 and Glu-209. Glu-209 lines the Ni(2+) pocket.

It belongs to the glyoxalase I family. Monomer. Requires Ni(2+) as cofactor. Phosphorylated after gibberellin treatment. As to expression, expressed in callus, stem, leaves, panicles and maturing seeds (at protein level).

The catalysed reaction is (R)-S-lactoylglutathione = methylglyoxal + glutathione. It functions in the pathway secondary metabolite metabolism; methylglyoxal degradation; (R)-lactate from methylglyoxal: step 1/2. Functionally, catalyzes the conversion of hemimercaptal, formed from methylglyoxal and glutathione, to S-lactoylglutathione. Involved in the detoxifiation of methylglyoxal. Can functionally complement growth defect of a yeast mutant lacking GLY I. Involved in abiotic stress response. Over-expression of GLYI-11 in tobacco increases tolerance to osmotic, oxidative and salt stresses. The protein is Lactoylglutathione lyase of Oryza sativa subsp. japonica (Rice).